A 793-amino-acid chain; its full sequence is Short transient receptor potential channel 1 (793 aa).

Residues 1 to 30 (MMAALYPSTDLSGVSSSSLPSSPSSSSPNE) form a disordered region. Topologically, residues 1-345 (MMAALYPSTD…FGQMSGYRRK (345 aa)) are cytoplasmic. The span at 15-28 (SSSSLPSSPSSSSP) shows a compositional bias: low complexity. ANK repeat units lie at residues 46–75 (LNEK…SGDL), 83–109 (LGRN…YGCQ), 111–156 (ADAL…EYST), and 158–180 (MDVA…MLLK). Zn(2+) is bound by residues His-189, Cys-193, Cys-195, and Cys-198. Positions 346 to 379 (PTCKKIMTVLTVGIFWPVLSLCYLIAPKSQFGRI) form an intramembrane region, discontinuously helical. Over 380–386 (IHTPFMK) the chain is Cytoplasmic. Residues 387 to 404 (FIIHGASYFTFLLLLNLY) form a helical membrane-spanning segment. Residues 405–422 (SLVYNEDKKNTMGPALER) are Extracellular-facing. Residues 423 to 439 (IDYLLILWIIGMIWSDI) traverse the membrane as a helical segment. Residues 440 to 455 (KRLWYEGLEDFLEESR) are Cytoplasmic-facing. The chain crosses the membrane as a helical span at residues 456–475 (NQLSFVMNSLYLATFALKVV). Residues 476–496 (AHNKFHDFADRKDWDAFHPTL) are Extracellular-facing. Residues 497-517 (VAEGLFAFANVLSYLRLFFMY) traverse the membrane as a helical segment. Over 518–536 (TTSSILGPLQISMGQMLQD) the chain is Cytoplasmic. The helical transmembrane segment at 537-558 (FGKFLGMFLLVLFSFTIGLTQL) threads the bilayer. Over 559-623 (YDKGYTSKEQ…GEELQSFVGA (65 aa)) the chain is Extracellular. An intrachain disulfide couples Cys-571 to Cys-576. Residues 624–644 (VIVGTYNVVVVIVLTKLLVAM) traverse the membrane as a helical segment. Residues 645-793 (LHKSFQLIAN…SKYAMFYPRN (149 aa)) lie on the Cytoplasmic side of the membrane.

The protein belongs to the transient receptor (TC 1.A.4) family. STrpC subfamily. TRPC1 sub-subfamily. Heterotetramer with TRPC4 and/or TRPC5. Forms a heteromeric ion channel with TRPC4, with a 1:3 TRPC1:TRPC4 stoichiometry. Unlike other TRP channel proteins, does not form a homomeric channel. Interacts with TRPC4AP. Interacts with ITPR3. Interacts with MX1 and RNF24. Interacts with FKBP4. Interacts with PLSCR1. Interacts with PKD2L2. Forms a heterotetramer with PKD2 with a 2:2 stoichiometry; has distinct channel properties separate from PKD2 or TRPC1 homomers alone. In terms of processing, activation of PRKCA induces phosphorylation of TRPC1 and subsequent Ca2+ entry into cells.

Its subcellular location is the cell membrane. It carries out the reaction Ca(2+)(in) = Ca(2+)(out). It catalyses the reaction Na(+)(in) = Na(+)(out). The enzyme catalyses Li(+)(in) = Li(+)(out). The catalysed reaction is Cs(+)(in) = Cs(+)(out). With respect to regulation, may be operated by a phosphatidylinositol second messenger system activated by receptor tyrosine kinases or G-protein coupled receptors. Also activated by intracellular calcium store depletion. In terms of biological role, forms a receptor-activated non-selective calcium permeant cation channel. Forms a heteromeric ion channel with TRPC4 or TRPC5 that has reduced calcium permeability compared to the homomeric TRPC4 or TRPC5 channel. Also permeable to monovalent ions including sodium, lithium and cesium ions. In Mus musculus (Mouse), this protein is Short transient receptor potential channel 1 (Trpc1).